Here is a 159-residue protein sequence, read N- to C-terminus: Histone H2A (159 aa).

A compositionally biased stretch (gly residues) spans 1–10 (MDSTGTGAGG). Disordered regions lie at residues 1-31 (MDST…SVSR) and 133-159 (KTAE…PKKA). Composition is skewed to basic residues over residues 11–29 (KGKK…KKSV) and 149–159 (PKKAAKSPKKA). Short sequence motifs (SPKK motif) lie at residues 148-151 (SPKK) and 155-158 (SPKK).

The protein belongs to the histone H2A family. In terms of assembly, the nucleosome is a histone octamer containing two molecules each of H2A, H2B, H3 and H4 assembled in one H3-H4 heterotetramer and two H2A-H2B heterodimers. The octamer wraps approximately 147 bp of DNA.

The protein localises to the nucleus. It localises to the chromosome. Core component of nucleosome. Nucleosomes wrap and compact DNA into chromatin, limiting DNA accessibility to the cellular machineries which require DNA as a template. Histones thereby play a central role in transcription regulation, DNA repair, DNA replication and chromosomal stability. DNA accessibility is regulated via a complex set of post-translational modifications of histones, also called histone code, and nucleosome remodeling. This Zea mays (Maize) protein is Histone H2A.